The sequence spans 118 residues: Small ribosomal subunit protein uS13 (118 aa).

A disordered region spans residues 91–118 (HRRGLPVRGQRTKTNARTRKGPRKPIKK).

The protein belongs to the universal ribosomal protein uS13 family. Part of the 30S ribosomal subunit. Forms a loose heterodimer with protein S19. Forms two bridges to the 50S subunit in the 70S ribosome.

Located at the top of the head of the 30S subunit, it contacts several helices of the 16S rRNA. In the 70S ribosome it contacts the 23S rRNA (bridge B1a) and protein L5 of the 50S subunit (bridge B1b), connecting the 2 subunits; these bridges are implicated in subunit movement. Contacts the tRNAs in the A and P-sites. The sequence is that of Small ribosomal subunit protein uS13 from Hamiltonella defensa subsp. Acyrthosiphon pisum (strain 5AT).